Consider the following 957-residue polypeptide: SH3 domain-binding protein 4-B (957 aa).

The SH3 1 domain occupies 54-113 (ENVKEVVAIKDYCPNNFTTLKFSKGEHLYVLDASGGDWWYAHNTTEMGYIPSSYVQPLNY). Positions 312–449 (TSIVCRLDSS…LEPVMYVVMV (138 aa)) constitute a ZU5 domain. The region spanning 649 to 719 (TSLKYGKLIK…HAKNVLVVGK (71 aa)) is the SH3 2 domain.

In terms of assembly, homodimer or homooligomer.

It is found in the membrane. It localises to the clathrin-coated pit. The protein resides in the cytoplasmic vesicle. Its subcellular location is the clathrin-coated vesicle. The protein localises to the nucleus. In terms of biological role, possible role in regulating endocytosis of the transferrin receptor at the plasma membrane. Alternatively, may function as a negative regulator of the amino acid-induced TOR signaling by inhibiting the formation of active Rag GTPase complexes. Preferentially binds inactive Rag GTPase complexes and prevents their interaction with the mTORC1 complex inhibiting its relocalization to lysosomes and its activation. Thereby, may indirectly regulate cell growth, proliferation and autophagy. The sequence is that of SH3 domain-binding protein 4-B (sh3bp4-b) from Xenopus laevis (African clawed frog).